The chain runs to 329 residues: 4-diphosphocytidyl-2-C-methyl-D-erythritol kinase (329 aa).

The active site involves Lys14. 117–127 is a binding site for ATP; it reads PSGAGMGGASS. Asp166 is an active-site residue.

The protein belongs to the GHMP kinase family. IspE subfamily.

It carries out the reaction 4-CDP-2-C-methyl-D-erythritol + ATP = 4-CDP-2-C-methyl-D-erythritol 2-phosphate + ADP + H(+). Its pathway is isoprenoid biosynthesis; isopentenyl diphosphate biosynthesis via DXP pathway; isopentenyl diphosphate from 1-deoxy-D-xylulose 5-phosphate: step 3/6. Catalyzes the phosphorylation of the position 2 hydroxy group of 4-diphosphocytidyl-2C-methyl-D-erythritol. The polypeptide is 4-diphosphocytidyl-2-C-methyl-D-erythritol kinase (Rhodopirellula baltica (strain DSM 10527 / NCIMB 13988 / SH1)).